A 517-amino-acid chain; its full sequence is Protein IQ-DOMAIN 13 (517 aa).

Positions 1 to 11 (MGKKGSWFSAI) are calmodulin-binding. Disordered regions lie at residues 1–60 (MGKK…FLPI) and 81–147 (VFRP…PRAV). Residues 40-49 (KKKKGFGKKL) show a composition bias toward basic residues. Residues 89 to 99 (DRANSSSTSVA) are compositionally biased toward polar residues. The segment covering 134–144 (PKPPSPKPPSP) has biased composition (pro residues). 2 IQ domains span residues 168 to 196 (KNAYAIKIQAAFRGYMARRSFRALKGLVR) and 197 to 218 (LQGVVRGHSVKRQTMNAMKYMQ). Disordered stretches follow at residues 324–407 (QPFR…LTSC) and 425–452 (KLRANSNPKERMDRTPVSTNEKRRSSFP). Over residues 328-342 (LTPTRPSLSPQPQSS) the composition is skewed to low complexity. Positions 343 to 367 (NQNHFRLNNSFDTSTPNSSKSTFVT) are enriched in polar residues. The segment covering 432-448 (PKERMDRTPVSTNEKRR) has biased composition (basic and acidic residues).

This sequence belongs to the IQD family. Binds to multiple calmodulin (CaM) in the presence of Ca(2+) and CaM-like proteins. Expressed in vessels of roots, cotyledons and leaves, as well as in trichomes.

It localises to the cell membrane. Its subcellular location is the cytoplasm. The protein localises to the cytoskeleton. May be involved in cooperative interactions with calmodulins or calmodulin-like proteins. Recruits calmodulin proteins to microtubules, thus being a potential scaffold in cellular signaling and trafficking. Regulates the formation of oval xylem secondary cell-wall deposition pits through microtubule-dependent lateral inhibition of Rho GTPase domains, thus confining the area of active ROP domains within the lattice of the cortical microtubules. May associate with nucleic acids and regulate gene expression at the transcriptional or post-transcriptional level. The polypeptide is Protein IQ-DOMAIN 13 (Arabidopsis thaliana (Mouse-ear cress)).